A 216-amino-acid polypeptide reads, in one-letter code: Mite allergen Lep d 7 (216 aa).

Residues 1 to 19 (MQYLAIAVIVALAGLSAAA) form the signal peptide.

The protein belongs to the mite group 7 allergen family.

The protein localises to the secreted. The sequence is that of Mite allergen Lep d 7 from Lepidoglyphus destructor (Storage mite).